Here is a 327-residue protein sequence, read N- to C-terminus: Gibberellin 2-beta-dioxygenase 1 (327 aa).

Positions 171 to 276 constitute a Fe2OG dioxygenase domain; that stretch reads QSDCLFRVNH…RLSMIYFCGP (106 aa). The Fe cation site is built by His200, Asp202, and His257. Arg267 is an active-site residue.

The protein belongs to the iron/ascorbate-dependent oxidoreductase family. GA2OX subfamily. Fe cation serves as cofactor. Predominantly expressed in roots, flowers, young fruits and seeds.

It catalyses the reaction gibberellin A1 + 2-oxoglutarate + O2 = gibberellin A8 + succinate + CO2. The protein operates within plant hormone biosynthesis; gibberellin biosynthesis. In terms of biological role, catalyzes the 2-beta-hydroxylation of several biologically active gibberellins, leading to the homeostatic regulation of their endogenous level. Catabolism of gibberellins (GAs) plays a central role in plant development. Converts GA9/GA20 to GA51/GA29 and GA4/GA1 to GA34/GA8. This is Gibberellin 2-beta-dioxygenase 1 (GA2OX1) from Pisum sativum (Garden pea).